The sequence spans 94 residues: Beta-defensin 132 (94 aa).

The N-terminal stretch at 1-22 (MKFLLLVLAALGFLTQVIPASA) is a signal peptide. 2 cysteine pairs are disulfide-bonded: Cys27/Cys55 and Cys39/Cys56. Residues 72–94 (GNHWQSRRNTQRKDKKQQTTVTS) form a disordered region. Positions 76–86 (QSRRNTQRKDK) are enriched in basic residues.

The protein belongs to the beta-defensin family.

It localises to the secreted. Functionally, has antibacterial activity. The protein is Beta-defensin 132 (DEFB132) of Gorilla gorilla gorilla (Western lowland gorilla).